Reading from the N-terminus, the 367-residue chain is Riboflavin biosynthesis protein RibD (367 aa).

The CMP/dCMP-type deaminase domain maps to 1–123; the sequence is MQDEYYMARA…RLQQAGIDVS (123 aa). The deaminase stretch occupies residues 1 to 145; the sequence is MQDEYYMARA…KGFLKRMRTG (145 aa). Histidine 50 provides a ligand contact to Zn(2+). Catalysis depends on glutamate 52, which acts as the Proton donor. Residues cysteine 75 and cysteine 84 each coordinate Zn(2+). The tract at residues 146 to 367 is reductase; sequence FPYIQLKLGA…PDVCLHLVGA (222 aa). 161–164 provides a ligand contact to NADP(+); sequence TAMA. Serine 168 lines the substrate pocket. NADP(+) is bound at residue tryptophan 170. Arginine 184 provides a ligand contact to substrate. NADP(+) contacts are provided by threonine 196 and aspartate 200. Substrate-binding residues include leucine 204 and arginine 207. Residue serine 234 coordinates NADP(+). A substrate-binding site is contributed by glutamate 299. NADP(+) is bound at residue 301 to 304; the sequence is GPTL.

It in the N-terminal section; belongs to the cytidine and deoxycytidylate deaminase family. The protein in the C-terminal section; belongs to the HTP reductase family. In terms of assembly, homodimer. Zn(2+) is required as a cofactor.

It catalyses the reaction 2,5-diamino-6-hydroxy-4-(5-phosphoribosylamino)-pyrimidine + H2O + H(+) = 5-amino-6-(5-phospho-D-ribosylamino)uracil + NH4(+). The catalysed reaction is 5-amino-6-(5-phospho-D-ribitylamino)uracil + NADP(+) = 5-amino-6-(5-phospho-D-ribosylamino)uracil + NADPH + H(+). It participates in cofactor biosynthesis; riboflavin biosynthesis; 5-amino-6-(D-ribitylamino)uracil from GTP: step 2/4. Its pathway is cofactor biosynthesis; riboflavin biosynthesis; 5-amino-6-(D-ribitylamino)uracil from GTP: step 3/4. Its function is as follows. Converts 2,5-diamino-6-(ribosylamino)-4(3h)-pyrimidinone 5'-phosphate into 5-amino-6-(ribosylamino)-2,4(1h,3h)-pyrimidinedione 5'-phosphate. This Escherichia coli (strain K12) protein is Riboflavin biosynthesis protein RibD (ribD).